The primary structure comprises 144 residues: Bacilliredoxin BC_2157 (144 aa).

This sequence belongs to the bacilliredoxin family.

The protein is Bacilliredoxin BC_2157 of Bacillus cereus (strain ATCC 14579 / DSM 31 / CCUG 7414 / JCM 2152 / NBRC 15305 / NCIMB 9373 / NCTC 2599 / NRRL B-3711).